We begin with the raw amino-acid sequence, 215 residues long: NAD(P)H-hydrate epimerase (215 aa).

In terms of domain architecture, YjeF N-terminal spans 10-212; that stretch reads SRELDDKTIN…DIGIYRGNAF (203 aa). 59-63 serves as a coordination point for (6S)-NADPHX; it reads NNGGD. 2 residues coordinate K(+): Asn60 and Asp122. (6S)-NADPHX contacts are provided by residues 126–132 and Asp155; that span reads GSGLSRN. Ser158 is a K(+) binding site.

It belongs to the NnrE/AIBP family. It depends on K(+) as a cofactor.

The enzyme catalyses (6R)-NADHX = (6S)-NADHX. The catalysed reaction is (6R)-NADPHX = (6S)-NADPHX. Its function is as follows. Catalyzes the epimerization of the S- and R-forms of NAD(P)HX, a damaged form of NAD(P)H that is a result of enzymatic or heat-dependent hydration. This is a prerequisite for the S-specific NAD(P)H-hydrate dehydratase to allow the repair of both epimers of NAD(P)HX. The sequence is that of NAD(P)H-hydrate epimerase from Lentilactobacillus buchneri (strain NRRL B-30929) (Lactobacillus buchneri).